Reading from the N-terminus, the 146-residue chain is General odorant-binding protein 19a (146 aa).

Positions 1–22 (MKFHLLLVCVAISLGPIPQSEA) are cleaved as a signal peptide. 3 disulfides stabilise this stretch: Cys-40–Cys-72, Cys-68–Cys-126, and Cys-113–Cys-135.

The protein belongs to the PBP/GOBP family. As to expression, expressed in adult olfactory system. Expressed exclusively in a subset of chemosensory sensilla on the third antennal segment.

Its subcellular location is the secreted. In terms of biological role, present in the aqueous fluid surrounding olfactory sensory dendrites and are thought to aid in the capture and transport of hydrophobic odorants into and through this fluid. The polypeptide is General odorant-binding protein 19a (Obp19a) (Drosophila melanogaster (Fruit fly)).